The chain runs to 377 residues: Chaperone protein DnaJ (377 aa).

Residues Asp4–Gly69 form the J domain. A CR-type zinc finger spans residues Gly131–Val213. Residues Cys144, Cys147, Cys161, Cys164, Cys187, Cys190, Cys201, and Cys204 each coordinate Zn(2+). CXXCXGXG motif repeat units lie at residues Cys144–Gly151, Cys161–Gly168, Cys187–Gly194, and Cys201–Gly208.

Belongs to the DnaJ family. Homodimer. Zn(2+) serves as cofactor.

It localises to the cytoplasm. Participates actively in the response to hyperosmotic and heat shock by preventing the aggregation of stress-denatured proteins and by disaggregating proteins, also in an autonomous, DnaK-independent fashion. Unfolded proteins bind initially to DnaJ; upon interaction with the DnaJ-bound protein, DnaK hydrolyzes its bound ATP, resulting in the formation of a stable complex. GrpE releases ADP from DnaK; ATP binding to DnaK triggers the release of the substrate protein, thus completing the reaction cycle. Several rounds of ATP-dependent interactions between DnaJ, DnaK and GrpE are required for fully efficient folding. Also involved, together with DnaK and GrpE, in the DNA replication of plasmids through activation of initiation proteins. In Desulfitobacterium hafniense (strain DSM 10664 / DCB-2), this protein is Chaperone protein DnaJ.